Consider the following 215-residue polypeptide: 3-demethoxyubiquinol 3-hydroxylase (215 aa).

Glutamate 64, glutamate 94, histidine 97, glutamate 146, glutamate 178, and histidine 181 together coordinate Fe cation.

This sequence belongs to the COQ7 family. Requires Fe cation as cofactor.

Its subcellular location is the cell membrane. It carries out the reaction a 5-methoxy-2-methyl-3-(all-trans-polyprenyl)benzene-1,4-diol + AH2 + O2 = a 3-demethylubiquinol + A + H2O. The protein operates within cofactor biosynthesis; ubiquinone biosynthesis. Its function is as follows. Catalyzes the hydroxylation of 2-nonaprenyl-3-methyl-6-methoxy-1,4-benzoquinol during ubiquinone biosynthesis. This chain is 3-demethoxyubiquinol 3-hydroxylase, found in Bordetella avium (strain 197N).